The primary structure comprises 201 residues: CASP-like protein 2B2 (201 aa).

The Cytoplasmic segment spans residues 1–28 (MSYLGVGVSPGNVSGSTTKMKLIDRKVR). Residues 29-49 (VTELILRCLVCVLALVAAILI) form a helical membrane-spanning segment. The Extracellular segment spans residues 50–71 (ATDVQVREIFMIQKKAKFTDMK). A helical membrane pass occupies residues 72-92 (ALVLLVVVNGIAAGYSLVQAV). Residues 93–108 (RCVVGLMKGRVLFSKP) lie on the Cytoplasmic side of the membrane. The helical transmembrane segment at 109-129 (LAWAIFFGDQAVAYLCVAGVA) threads the bilayer. Residues 130-166 (AAAQSAAFAKLGEPELQWMKICNMYGKFCNQVGEGIA) are Extracellular-facing. The helical transmembrane segment at 167–187 (SALFACIGMVLISCISAFGVF) threads the bilayer. Residues 188–201 (RLYGGSKSRPSSRW) are Cytoplasmic-facing.

Belongs to the Casparian strip membrane proteins (CASP) family. Homodimer and heterodimers.

Its subcellular location is the cell membrane. The sequence is that of CASP-like protein 2B2 from Arabidopsis thaliana (Mouse-ear cress).